The primary structure comprises 151 residues: Transcriptional regulator MraZ (151 aa).

2 consecutive SpoVT-AbrB domains span residues 5-56 and 85-128; these read THRH…PLPT and SEEL…DAAR.

The protein belongs to the MraZ family. Forms oligomers.

Its subcellular location is the cytoplasm. It is found in the nucleoid. In Acidithiobacillus ferrooxidans (strain ATCC 23270 / DSM 14882 / CIP 104768 / NCIMB 8455) (Ferrobacillus ferrooxidans (strain ATCC 23270)), this protein is Transcriptional regulator MraZ.